We begin with the raw amino-acid sequence, 428 residues long: Sorting nexin-31 (428 aa).

The 107-residue stretch at Met-1–Thr-107 folds into the PX domain.

Belongs to the sorting nexin family.

Functionally, may be involved in protein trafficking. This Xenopus tropicalis (Western clawed frog) protein is Sorting nexin-31 (snx31).